We begin with the raw amino-acid sequence, 290 residues long: Translin-associated protein X (290 aa).

Residues 1-34 (MNGKEGPGGFRKRKHDNFPHNQRREGKDASSSSP) are disordered. Basic and acidic residues predominate over residues 16-28 (DNFPHNQRREGKD). The tract at residues 73-208 (LLHRITSAPD…MRMCINSVGN (136 aa)) is interaction with C1D. Mg(2+) contacts are provided by Glu-129 and Glu-197. Lys-279 participates in a covalent cross-link: Glycyl lysine isopeptide (Lys-Gly) (interchain with G-Cter in SUMO2).

The protein belongs to the translin family. Ring-shaped heterooctamer of six TSN and two TSNAX subunits. Interacts with GOLGA3, TSNAXIP1, SUN1 and AKAP9. Interacts with the homodimeric form of C1D following gamma-radiation. Interacts with TSN and C1D in a mutually exclusive manner. In terms of processing, sumoylated with SUMO1. As to expression, detected in cerebellum.

The protein resides in the cytoplasm. The protein localises to the perinuclear region. Its subcellular location is the golgi apparatus. It localises to the nucleus. Its function is as follows. Acts in combination with TSN as an endonuclease involved in the activation of the RNA-induced silencing complex (RISC). Possible role in spermatogenesis. This Rattus norvegicus (Rat) protein is Translin-associated protein X (Tsnax).